Here is a 151-residue protein sequence, read N- to C-terminus: MAQKEIVSNRKALRNYEVIETLEAGIVLTGTEIKSLRDHGGNLGDAYVIVSKGEGWLLNASIAPYRFGNIYNHEERRKRKLLLHRYELRKLEGKIAQKGMTLIPLGMFLSRGYVKVRLGCCRGKKAYDKRRTIIEREKEREVAAAMKRRHH.

The protein belongs to the SmpB family.

The protein resides in the cytoplasm. Its function is as follows. Required for rescue of stalled ribosomes mediated by trans-translation. Binds to transfer-messenger RNA (tmRNA), required for stable association of tmRNA with ribosomes. tmRNA and SmpB together mimic tRNA shape, replacing the anticodon stem-loop with SmpB. tmRNA is encoded by the ssrA gene; the 2 termini fold to resemble tRNA(Ala) and it encodes a 'tag peptide', a short internal open reading frame. During trans-translation Ala-aminoacylated tmRNA acts like a tRNA, entering the A-site of stalled ribosomes, displacing the stalled mRNA. The ribosome then switches to translate the ORF on the tmRNA; the nascent peptide is terminated with the 'tag peptide' encoded by the tmRNA and targeted for degradation. The ribosome is freed to recommence translation, which seems to be the essential function of trans-translation. The chain is SsrA-binding protein from Chlamydia pneumoniae (Chlamydophila pneumoniae).